The sequence spans 388 residues: Homoserine O-acetyltransferase (388 aa).

The AB hydrolase-1 domain occupies 55 to 354 (PIVLIEHALT…PTGHDGFLIE (300 aa)). Ser-150 acts as the Nucleophile in catalysis. Arg-220 contributes to the substrate binding site. Catalysis depends on residues Asp-318 and His-348. Asp-349 provides a ligand contact to substrate.

The protein belongs to the AB hydrolase superfamily. MetX family. Homodimer.

It is found in the cytoplasm. It catalyses the reaction L-homoserine + acetyl-CoA = O-acetyl-L-homoserine + CoA. It participates in amino-acid biosynthesis; L-methionine biosynthesis via de novo pathway; O-acetyl-L-homoserine from L-homoserine: step 1/1. Transfers an acetyl group from acetyl-CoA to L-homoserine, forming acetyl-L-homoserine. The chain is Homoserine O-acetyltransferase from Corynebacterium urealyticum (strain ATCC 43042 / DSM 7109).